A 158-amino-acid chain; its full sequence is Cyclic pyranopterin monophosphate synthase (158 aa).

Residues 76 to 78 and 114 to 115 contribute to the substrate site; these read MCH and ME. The active site involves aspartate 129.

It belongs to the MoaC family. In terms of assembly, homohexamer; trimer of dimers.

The catalysed reaction is (8S)-3',8-cyclo-7,8-dihydroguanosine 5'-triphosphate = cyclic pyranopterin phosphate + diphosphate. The protein operates within cofactor biosynthesis; molybdopterin biosynthesis. In terms of biological role, catalyzes the conversion of (8S)-3',8-cyclo-7,8-dihydroguanosine 5'-triphosphate to cyclic pyranopterin monophosphate (cPMP). The polypeptide is Cyclic pyranopterin monophosphate synthase (Clostridium perfringens (strain 13 / Type A)).